A 658-amino-acid polypeptide reads, in one-letter code: UvrABC system protein B (658 aa).

Residues alanine 26–proline 414 enclose the Helicase ATP-binding domain. Glycine 39–threonine 46 provides a ligand contact to ATP. The Beta-hairpin motif lies at tyrosine 92–isoleucine 115. In terms of domain architecture, Helicase C-terminal spans glutamine 430–isoleucine 592. The UVR domain maps to aspartate 622–glycine 658.

The protein belongs to the UvrB family. As to quaternary structure, forms a heterotetramer with UvrA during the search for lesions. Interacts with UvrC in an incision complex.

Its subcellular location is the cytoplasm. The UvrABC repair system catalyzes the recognition and processing of DNA lesions. A damage recognition complex composed of 2 UvrA and 2 UvrB subunits scans DNA for abnormalities. Upon binding of the UvrA(2)B(2) complex to a putative damaged site, the DNA wraps around one UvrB monomer. DNA wrap is dependent on ATP binding by UvrB and probably causes local melting of the DNA helix, facilitating insertion of UvrB beta-hairpin between the DNA strands. Then UvrB probes one DNA strand for the presence of a lesion. If a lesion is found the UvrA subunits dissociate and the UvrB-DNA preincision complex is formed. This complex is subsequently bound by UvrC and the second UvrB is released. If no lesion is found, the DNA wraps around the other UvrB subunit that will check the other stand for damage. The chain is UvrABC system protein B from Listeria monocytogenes serovar 1/2a (strain ATCC BAA-679 / EGD-e).